A 500-amino-acid chain; its full sequence is Glycerol kinase (500 aa).

Thr-13 serves as a coordination point for ADP. Thr-13, Thr-14, and Ser-15 together coordinate ATP. Thr-13 serves as a coordination point for sn-glycerol 3-phosphate. Arg-17 is a binding site for ADP. Positions 83, 84, 135, and 244 each coordinate sn-glycerol 3-phosphate. Glycerol-binding residues include Arg-83, Glu-84, Tyr-135, Asp-244, and Gln-245. ADP-binding residues include Thr-266, Gly-309, Gly-410, and Asn-414. 3 residues coordinate ATP: Thr-266, Gly-309, and Gly-410.

It belongs to the FGGY kinase family.

It carries out the reaction glycerol + ATP = sn-glycerol 3-phosphate + ADP + H(+). Its pathway is polyol metabolism; glycerol degradation via glycerol kinase pathway; sn-glycerol 3-phosphate from glycerol: step 1/1. Inhibited by fructose 1,6-bisphosphate (FBP). In terms of biological role, key enzyme in the regulation of glycerol uptake and metabolism. Catalyzes the phosphorylation of glycerol to yield sn-glycerol 3-phosphate. This chain is Glycerol kinase, found in Chromobacterium violaceum (strain ATCC 12472 / DSM 30191 / JCM 1249 / CCUG 213 / NBRC 12614 / NCIMB 9131 / NCTC 9757 / MK).